Reading from the N-terminus, the 102-residue chain is Small ribosomal subunit protein uS10 (102 aa).

Belongs to the universal ribosomal protein uS10 family. In terms of assembly, part of the 30S ribosomal subunit.

Its function is as follows. Involved in the binding of tRNA to the ribosomes. In Micrococcus luteus (strain ATCC 4698 / DSM 20030 / JCM 1464 / CCM 169 / CCUG 5858 / IAM 1056 / NBRC 3333 / NCIMB 9278 / NCTC 2665 / VKM Ac-2230) (Micrococcus lysodeikticus), this protein is Small ribosomal subunit protein uS10.